The following is a 1280-amino-acid chain: E3 ubiquitin-protein ligase RKP (1280 aa).

The 188-residue stretch at 82–269 (KLHGDLDVSV…CELNFGAYPF (188 aa)) folds into the B30.2/SPRY domain. A helical transmembrane segment spans residues 551-571 (SVLVSLFSVILHFLSEGFAML). The interval 669 to 719 (DRGKNTAQSSRGRCSSIPERSSHVAAECSAGSFSEEIDDKPSTSNQSDPDF) is disordered. Residues 834 to 854 (ALCMWVVQLLLVLSKMDSVFV) traverse the membrane as a helical segment. Residues 1217–1252 (CCICYAGEANAMIAPCSHRSCYGCITRHLLNCQRCF) form an RING-type zinc finger.

It localises to the membrane. The enzyme catalyses S-ubiquitinyl-[E2 ubiquitin-conjugating enzyme]-L-cysteine + [acceptor protein]-L-lysine = [E2 ubiquitin-conjugating enzyme]-L-cysteine + N(6)-ubiquitinyl-[acceptor protein]-L-lysine.. In terms of biological role, E3 ubiquitin-protein ligase that promotes the ubiquitination and proteasomal degradation of KRP1 and KRP2. The chain is E3 ubiquitin-protein ligase RKP (RKP) from Arabidopsis thaliana (Mouse-ear cress).